Consider the following 207-residue polypeptide: Superoxide dismutase [Mn] (207 aa).

His-28, His-76, Asp-160, and His-164 together coordinate Mn(2+).

Belongs to the iron/manganese superoxide dismutase family. Homotetramer. Requires Mn(2+) as cofactor.

Its subcellular location is the secreted. The enzyme catalyses 2 superoxide + 2 H(+) = H2O2 + O2. Functionally, destroys superoxide anion radicals which are normally produced within the cells and which are toxic to biological systems. In Mycolicibacterium smegmatis (Mycobacterium smegmatis), this protein is Superoxide dismutase [Mn] (sodA).